A 446-amino-acid polypeptide reads, in one-letter code: tRNA-2-methylthio-N(6)-dimethylallyladenosine synthase (446 aa).

Residues 2–122 (KKAYVKSYGC…LPDLLRQSRE (121 aa)) form the MTTase N-terminal domain. [4Fe-4S] cluster contacts are provided by Cys11, Cys47, Cys85, Cys157, Cys161, and Cys164. One can recognise a Radical SAM core domain in the interval 143–375 (RNRGVTGFLT…QQLLDQQRHA (233 aa)). Residues 378-440 (AAAVGTVAEI…SNSLFGEVLE (63 aa)) enclose the TRAM domain.

The protein belongs to the methylthiotransferase family. MiaB subfamily. Monomer. Requires [4Fe-4S] cluster as cofactor.

It localises to the cytoplasm. It catalyses the reaction N(6)-dimethylallyladenosine(37) in tRNA + (sulfur carrier)-SH + AH2 + 2 S-adenosyl-L-methionine = 2-methylsulfanyl-N(6)-dimethylallyladenosine(37) in tRNA + (sulfur carrier)-H + 5'-deoxyadenosine + L-methionine + A + S-adenosyl-L-homocysteine + 2 H(+). Its function is as follows. Catalyzes the methylthiolation of N6-(dimethylallyl)adenosine (i(6)A), leading to the formation of 2-methylthio-N6-(dimethylallyl)adenosine (ms(2)i(6)A) at position 37 in tRNAs that read codons beginning with uridine. This chain is tRNA-2-methylthio-N(6)-dimethylallyladenosine synthase, found in Methylorubrum populi (strain ATCC BAA-705 / NCIMB 13946 / BJ001) (Methylobacterium populi).